The sequence spans 433 residues: Adenylyltransferase and sulfurtransferase UBA4 (433 aa).

ATP is bound by residues Gly70, Asp91, 98-102 (SNLHR), Lys115, and 159-160 (DT). Cys201 and Cys204 together coordinate Zn(2+). Cys218 acts as the Glycyl thioester intermediate; for adenylyltransferase activity in catalysis. Zn(2+) is bound by residues Cys279 and Cys282. Residues 332–431 (SGNNKVLLDV…YIDDVDQSIP (100 aa)) form the Rhodanese domain. The active-site Cysteine persulfide intermediate; for sulfurtransferase activity is the Cys390.

It in the N-terminal section; belongs to the HesA/MoeB/ThiF family. UBA4 subfamily. Requires Zn(2+) as cofactor.

Its subcellular location is the cytoplasm. The protein localises to the cytosol. It participates in tRNA modification; 5-methoxycarbonylmethyl-2-thiouridine-tRNA biosynthesis. Plays a central role in 2-thiolation of mcm(5)S(2)U at tRNA wobble positions of cytosolic tRNA(Lys), tRNA(Glu) and tRNA(Gln). Acts by mediating the C-terminal thiocarboxylation of sulfur carrier URM1. Its N-terminus first activates URM1 as acyl-adenylate (-COAMP), then the persulfide sulfur on the catalytic cysteine is transferred to URM1 to form thiocarboxylation (-COSH) of its C-terminus. The reaction probably involves hydrogen sulfide that is generated from the persulfide intermediate and that acts as a nucleophile towards URM1. Subsequently, a transient disulfide bond is formed. Does not use thiosulfate as sulfur donor; NFS1 probably acting as a sulfur donor for thiocarboxylation reactions. Prior mcm(5) tRNA modification by the elongator complex is required for 2-thiolation. May also be involved in protein urmylation. The polypeptide is Adenylyltransferase and sulfurtransferase UBA4 (Candida glabrata (strain ATCC 2001 / BCRC 20586 / JCM 3761 / NBRC 0622 / NRRL Y-65 / CBS 138) (Yeast)).